The sequence spans 470 residues: ATP synthase subunit beta (470 aa).

155 to 162 (GGAGVGKT) contributes to the ATP binding site.

The protein belongs to the ATPase alpha/beta chains family. As to quaternary structure, F-type ATPases have 2 components, CF(1) - the catalytic core - and CF(0) - the membrane proton channel. CF(1) has five subunits: alpha(3), beta(3), gamma(1), delta(1), epsilon(1). CF(0) has three main subunits: a(1), b(2) and c(9-12). The alpha and beta chains form an alternating ring which encloses part of the gamma chain. CF(1) is attached to CF(0) by a central stalk formed by the gamma and epsilon chains, while a peripheral stalk is formed by the delta and b chains.

The protein resides in the cell membrane. It carries out the reaction ATP + H2O + 4 H(+)(in) = ADP + phosphate + 5 H(+)(out). In terms of biological role, produces ATP from ADP in the presence of a proton gradient across the membrane. The catalytic sites are hosted primarily by the beta subunits. The polypeptide is ATP synthase subunit beta (Staphylococcus aureus (strain MW2)).